The sequence spans 89 residues: MSLSTEAKAQIIAEFGRDVNDSGSSEVQIALLTAQINHLQGHFSEHKKDHHSRRGLLRMVSQRRKLLDYLKRKNVTSYTALIGRLGLRR.

Belongs to the universal ribosomal protein uS15 family. As to quaternary structure, part of the 30S ribosomal subunit. Forms a bridge to the 50S subunit in the 70S ribosome, contacting the 23S rRNA.

In terms of biological role, one of the primary rRNA binding proteins, it binds directly to 16S rRNA where it helps nucleate assembly of the platform of the 30S subunit by binding and bridging several RNA helices of the 16S rRNA. Forms an intersubunit bridge (bridge B4) with the 23S rRNA of the 50S subunit in the ribosome. The polypeptide is Small ribosomal subunit protein uS15 (Photorhabdus laumondii subsp. laumondii (strain DSM 15139 / CIP 105565 / TT01) (Photorhabdus luminescens subsp. laumondii)).